The following is a 237-amino-acid chain: Large ribosomal subunit protein uL1 (237 aa).

The protein belongs to the universal ribosomal protein uL1 family. Part of the 50S ribosomal subunit.

In terms of biological role, binds directly to 23S rRNA. The L1 stalk is quite mobile in the ribosome, and is involved in E site tRNA release. Protein L1 is also a translational repressor protein, it controls the translation of the L11 operon by binding to its mRNA. The polypeptide is Large ribosomal subunit protein uL1 (Nocardia farcinica (strain IFM 10152)).